The following is a 446-amino-acid chain: MRTLNTSAMDGTGLVVERDFSVRILTACFLSLLILSTLLGNTLVCAAVIRFRHLRSKVTNFFVISLAVSDLLVAVLVMPWKAVAEIAGFWPFGSFCNIWVAFDIMCSTASILNLCVISVDRYWAISSPFRYERKMTPKAAFILISVAWTLSVLISFIPVQLSWHKAKPTSPSDGNATSLAETIDNCDSSLSRTYAISSSVISFYIPVAIMIVTYTRIYRIAQKQIRRIAALERAAVHAKNCQTTTGNGKPVECSQPESSFKMSFKRETKVLKTLSVIMGVFVCCWLPFFILNCILPFCGSGETQPFCIDSITFDVFVWFGWANSSLNPIIYAFNADFRKAFSTLLGCYRLCPATNNAIETVSINNNGAAMFSSHHEPRGSISKECNLVYLIPHAVGSSEDLKKEEAAGIARPLEKLSPALSVILDYDTDVSLEKIQPITQNGQHPT.

The Extracellular portion of the chain corresponds to 1–23; that stretch reads MRTLNTSAMDGTGLVVERDFSVR. The N-linked (GlcNAc...) asparagine glycan is linked to asparagine 5. Residues 24-49 form a helical membrane-spanning segment; it reads ILTACFLSLLILSTLLGNTLVCAAVI. Topologically, residues 50–60 are cytoplasmic; the sequence is RFRHLRSKVTN. Residues 61-87 form a helical membrane-spanning segment; sequence FFVISLAVSDLLVAVLVMPWKAVAEIA. At 88 to 96 the chain is on the extracellular side; it reads GFWPFGSFC. Cysteines 96 and 186 form a disulfide. A helical membrane pass occupies residues 97–119; it reads NIWVAFDIMCSTASILNLCVISV. Over 120-138 the chain is Cytoplasmic; that stretch reads DRYWAISSPFRYERKMTPK. A helical membrane pass occupies residues 139 to 163; it reads AAFILISVAWTLSVLISFIPVQLSW. Residues 164 to 192 lie on the Extracellular side of the membrane; the sequence is HKAKPTSPSDGNATSLAETIDNCDSSLSR. Residue asparagine 175 is glycosylated (N-linked (GlcNAc...) asparagine). Residues 193 to 218 traverse the membrane as a helical segment; it reads TYAISSSVISFYIPVAIMIVTYTRIY. At 219-272 the chain is on the cytoplasmic side; the sequence is RIAQKQIRRIAALERAAVHAKNCQTTTGNGKPVECSQPESSFKMSFKRETKVLK. A helical membrane pass occupies residues 273–299; sequence TLSVIMGVFVCCWLPFFILNCILPFCG. The Extracellular portion of the chain corresponds to 300–312; it reads SGETQPFCIDSIT. Residues 313–337 traverse the membrane as a helical segment; that stretch reads FDVFVWFGWANSSLNPIIYAFNADF. The Cytoplasmic portion of the chain corresponds to 338–446; sequence RKAFSTLLGC…PITQNGQHPT (109 aa). Residues cysteine 347 and cysteine 351 are each lipidated (S-palmitoyl cysteine).

This sequence belongs to the G-protein coupled receptor 1 family. In terms of assembly, interacts with DNAJC14 via its C-terminus. Interacts with DRD2. Interacts with DORIP1.

It is found in the cell membrane. The protein resides in the endoplasmic reticulum membrane. It localises to the cell projection. Its subcellular location is the cilium membrane. The protein localises to the dendrite. It is found in the dendritic spine. In terms of biological role, dopamine receptor whose activity is mediated by G proteins which activate adenylyl cyclase. In Macaca mulatta (Rhesus macaque), this protein is D(1A) dopamine receptor (DRD1).